Reading from the N-terminus, the 1065-residue chain is RNA2 polyprotein (1065 aa).

As to quaternary structure, interacts with the large capsid protein. Interacts with the movement protein (via C-terminus). Interacts with the small capsid protein. Homomultimer; assembles as pentons. In terms of assembly, interacts (via C-terminus) with the small capsid protein. Specific enzymatic cleavages by picornain 3C-like protease in vivo yield mature proteins.

The protein resides in the host endoplasmic reticulum. The protein localises to the host cell junction. Its subcellular location is the host plasmodesma. It is found in the virion. In terms of biological role, acts as a suppressor of post-transcriptional gene silencing (PTGS), a mechanism of plant viral defense that limits the accumulation of viral RNAs. Binds ssRNA. Its function is as follows. Transports the viral genome to neighboring plant cells directly through plasmosdesmata, without any budding. The movement protein allows efficient cell to cell propagation, by bypassing the host cell wall barrier. Acts by forming a tubular structure at the host plasmodesmata, enlarging it enough to allow free passage of virion capsids. Binds to GTP and to single-stranded RNA and single-stranded DNA in a non-sequence-specific manner. Also acts as a suppressor of post-transcriptional gene silencing (PTGS), a mechanism of plant viral defense that limits the accumulation of viral RNAs. Functionally, together with the small capsid protein, forms an icosahedral capsid (T=3) enclosing the viral positive strand RNA genome, with a diameter of approximately 300 Angstroms. The large capsid protein interacts with the viral RNA. Also acts as a suppressor of post-transcriptional gene silencing (PTGS), a mechanism of plant viral defense that limits the accumulation of viral RNAs. Binds ssRNA. Together with the large capsid protein, forms an icosahedral capsid (T=3) enclosing the viral positive strand RNA genome, with a diameter of approximately 300 Angstroms. The capsid is formed from 60 copies each of the large and the small capsid protein. The small capsid protein forms the turrets at the fivefold axes of the viral particle. The chain is RNA2 polyprotein from Broad bean wilt virus 2 (BBWV-2).